The primary structure comprises 270 residues: Plasmanylethanolamine desaturase 1 (270 aa).

3 helical membrane-spanning segments follow: residues Trp47–Leu67, Pro74–Val94, and Ala161–Phe181. A Histidine box-1 motif is present at residues His186–His190. Positions His213–His217 match the Histidine box-2 motif.

This sequence belongs to the fatty acid desaturase CarF family.

It localises to the endoplasmic reticulum membrane. The enzyme catalyses a 1-(1,2-saturated alkyl)-2-acyl-sn-glycero-3-phosphoethanolamine + 2 Fe(II)-[cytochrome b5] + O2 + 2 H(+) = a 1-O-(1Z-alkenyl)-2-acyl-sn-glycero-3-phosphoethanolamine + 2 Fe(III)-[cytochrome b5] + 2 H2O. It carries out the reaction a 1-O-hexadecyl-2-acyl-sn-glycero-3-phosphoethanolamine + 2 Fe(II)-[cytochrome b5] + O2 + 2 H(+) = a 1-O-(1Z-hexadecenyl)-2-acyl-sn-glycero-3-phosphoethanolamine + 2 Fe(III)-[cytochrome b5] + 2 H2O. It catalyses the reaction a 1-O-octadecyl-2-acyl-sn-glycero-3-phosphoethanolamine + 2 Fe(II)-[cytochrome b5] + O2 + 2 H(+) = a 1-O-(1Z-octadecenyl)-2-acyl-sn-glycero-3-phosphoethanolamine + 2 Fe(III)-[cytochrome b5] + 2 H2O. The catalysed reaction is a 1-O-(9Z-octadecenyl)-2-acyl-sn-glycero-3-phosphoethanolamine + 2 Fe(II)-[cytochrome b5] + O2 + 2 H(+) = a 1-O-(1Z,9Z-octadecadienyl)-2-acyl-sn-glycero-3-phosphoethanolamine + 2 Fe(III)-[cytochrome b5] + 2 H2O. Its pathway is lipid metabolism; fatty acid metabolism. Plasmanylethanolamine desaturase involved in plasmalogen biogenesis in the endoplasmic reticulum membrane. Plasmalogens are glycerophospholipids with a hydrocarbon chain linked by a vinyl ether bond at the glycerol sn-1 position, and are involved in antioxidative and signaling mechanisms. This Homo sapiens (Human) protein is Plasmanylethanolamine desaturase 1.